Consider the following 450-residue polypeptide: MGVALIVLAAGQGSRMNSELPKVLHPLAGAPLLAHGLRAGAALDPARIVVVTGHGAAAVEAATAQLAPEAICVRQTEQLGTGHAVAQTAQALAGFGGDALVLYGDTPFISPETLLAMQAARAAGADMVVLGFEAADPGRYGRLVTDGDALLRIVEAKDATPDELALDLCNSGVMMADAQVLLRLVAGLSNDNASREYYLTDTIAAGRAEGLRARVVVCPEAETLGINTRTELAAAEQAFQARARARALEDGVTLADPATTHFAVDTVIGRDATIGPQVVFGPGVTVESGAEIRAFSHLEGCHVSRGARVGPFARLRPGAELAENTHVGNFVEIKNATLAQGAKVNHLSYIGDAAIGEASNVGAGTITCNYDGVFKHRTEIGARSFIGSNTCLVAPVRVGDEAMTATGTVVTQDIPDGAMAVGRTRQENKPGFARKFMTMLRARKSAKGAQ.

A pyrophosphorylase region spans residues 1-229 (MGVALIVLAA…EAETLGINTR (229 aa)). UDP-N-acetyl-alpha-D-glucosamine is bound by residues 8-11 (LAAG), Lys-22, Gln-75, 80-81 (GT), 103-105 (YGD), Gly-141, Glu-155, Asn-170, and Asn-227. Asp-105 serves as a coordination point for Mg(2+). Asn-227 lines the Mg(2+) pocket. Positions 230-250 (TELAAAEQAFQARARARALED) are linker. Positions 251-450 (GVTLADPATT…RARKSAKGAQ (200 aa)) are N-acetyltransferase. Residues Arg-316 and Lys-334 each coordinate UDP-N-acetyl-alpha-D-glucosamine. Catalysis depends on His-346, which acts as the Proton acceptor. UDP-N-acetyl-alpha-D-glucosamine is bound by residues Tyr-349 and Asn-360. Acetyl-CoA is bound by residues Ala-363, 369-370 (NY), Ser-388, Thr-406, and Arg-423.

The protein in the N-terminal section; belongs to the N-acetylglucosamine-1-phosphate uridyltransferase family. It in the C-terminal section; belongs to the transferase hexapeptide repeat family. As to quaternary structure, homotrimer. Mg(2+) is required as a cofactor.

Its subcellular location is the cytoplasm. It carries out the reaction alpha-D-glucosamine 1-phosphate + acetyl-CoA = N-acetyl-alpha-D-glucosamine 1-phosphate + CoA + H(+). The catalysed reaction is N-acetyl-alpha-D-glucosamine 1-phosphate + UTP + H(+) = UDP-N-acetyl-alpha-D-glucosamine + diphosphate. It functions in the pathway nucleotide-sugar biosynthesis; UDP-N-acetyl-alpha-D-glucosamine biosynthesis; N-acetyl-alpha-D-glucosamine 1-phosphate from alpha-D-glucosamine 6-phosphate (route II): step 2/2. The protein operates within nucleotide-sugar biosynthesis; UDP-N-acetyl-alpha-D-glucosamine biosynthesis; UDP-N-acetyl-alpha-D-glucosamine from N-acetyl-alpha-D-glucosamine 1-phosphate: step 1/1. It participates in bacterial outer membrane biogenesis; LPS lipid A biosynthesis. In terms of biological role, catalyzes the last two sequential reactions in the de novo biosynthetic pathway for UDP-N-acetylglucosamine (UDP-GlcNAc). The C-terminal domain catalyzes the transfer of acetyl group from acetyl coenzyme A to glucosamine-1-phosphate (GlcN-1-P) to produce N-acetylglucosamine-1-phosphate (GlcNAc-1-P), which is converted into UDP-GlcNAc by the transfer of uridine 5-monophosphate (from uridine 5-triphosphate), a reaction catalyzed by the N-terminal domain. This Dinoroseobacter shibae (strain DSM 16493 / NCIMB 14021 / DFL 12) protein is Bifunctional protein GlmU.